Here is a 652-residue protein sequence, read N- to C-terminus: DNA ligase (652 aa).

NAD(+) contacts are provided by residues 29-33, 78-79, and Glu-107; these read DSQYD and SL. Lys-109 functions as the N6-AMP-lysine intermediate in the catalytic mechanism. Residues Arg-130, Glu-164, Lys-278, and Lys-302 each coordinate NAD(+). Positions 395, 398, 413, and 418 each coordinate Zn(2+). Positions 577–652 constitute a BRCT domain; sequence STDAQLSGLT…IQDEDWLLNL (76 aa).

It belongs to the NAD-dependent DNA ligase family. LigA subfamily. Mg(2+) serves as cofactor. Requires Mn(2+) as cofactor.

It catalyses the reaction NAD(+) + (deoxyribonucleotide)n-3'-hydroxyl + 5'-phospho-(deoxyribonucleotide)m = (deoxyribonucleotide)n+m + AMP + beta-nicotinamide D-nucleotide.. DNA ligase that catalyzes the formation of phosphodiester linkages between 5'-phosphoryl and 3'-hydroxyl groups in double-stranded DNA using NAD as a coenzyme and as the energy source for the reaction. It is essential for DNA replication and repair of damaged DNA. The chain is DNA ligase from Streptococcus agalactiae serotype V (strain ATCC BAA-611 / 2603 V/R).